Reading from the N-terminus, the 283-residue chain is NAD kinase (283 aa).

Asp-66 (proton acceptor) is an active-site residue. NAD(+) contacts are provided by residues 66-67 (DG), 140-141 (ND), Arg-151, Arg-168, Asp-170, and Gln-240.

It belongs to the NAD kinase family. A divalent metal cation is required as a cofactor.

The protein resides in the cytoplasm. It catalyses the reaction NAD(+) + ATP = ADP + NADP(+) + H(+). Its function is as follows. Involved in the regulation of the intracellular balance of NAD and NADP, and is a key enzyme in the biosynthesis of NADP. Catalyzes specifically the phosphorylation on 2'-hydroxyl of the adenosine moiety of NAD to yield NADP. This is NAD kinase from Syntrophobacter fumaroxidans (strain DSM 10017 / MPOB).